The primary structure comprises 652 residues: Cleavage and polyadenylation specificity factor subunit 6 (652 aa).

The segment at 20 to 85 (QAQDEFGGDG…GVYHQSSGSL (66 aa)) is disordered. The RRM domain occupies 93–173 (YQLYVGNLTW…QAPVVTYPSK (81 aa)). Disordered stretches follow at residues 184-440 (KTRP…QQMG) and 518-652 (SYNR…RSRH). The span at 187 to 203 (PVPPPQQNGPPRGPAPP) shows a compositional bias: pro residues. Positions 205–223 (MGGGPMPTGHPGGPQGGGP) are enriched in gly residues. Pro residues-rich tracts occupy residues 256-266 (SGPPRMQPPMH), 295-307 (GPRP…PPQR), and 338-352 (PQGP…PGPG). The segment covering 391 to 406 (PGMNMPPQQGMNMTPQ) has biased composition (low complexity). The span at 420–435 (GPWPPPQGKPPGPFPD) shows a compositional bias: pro residues. Residues 518 to 528 (SYNRRERSRSR) show a composition bias toward basic and acidic residues. Residues 529-538 (ERSHRSRQRR) show a composition bias toward basic residues. Residues 539-590 (ERSTSRYRERSRERERDRDRERERDGGSYRERSRSRERERQAPDHYRDDSRS) are compositionally biased toward basic and acidic residues. At Ser596 the chain carries Phosphoserine. The segment covering 598-610 (EPVVAEAAEAPSS) has biased composition (low complexity). Positions 612 to 652 (RYYEDRERYRSSDRERRDRDRDRDRERERDRDRREEHRSRH) are enriched in basic and acidic residues.

Belongs to the RRM CPSF6/7 family.

The protein resides in the nucleus. In terms of biological role, may play a role in pre-mRNA 3'-processing. In Drosophila melanogaster (Fruit fly), this protein is Cleavage and polyadenylation specificity factor subunit 6.